The chain runs to 492 residues: N-succinylglutamate 5-semialdehyde dehydrogenase (492 aa).

Residue 220–225 (GSANTG) participates in NAD(+) binding. Residues Glu-243 and Cys-277 contribute to the active site.

The protein belongs to the aldehyde dehydrogenase family. AstD subfamily.

It catalyses the reaction N-succinyl-L-glutamate 5-semialdehyde + NAD(+) + H2O = N-succinyl-L-glutamate + NADH + 2 H(+). Its pathway is amino-acid degradation; L-arginine degradation via AST pathway; L-glutamate and succinate from L-arginine: step 4/5. Its function is as follows. Catalyzes the NAD-dependent reduction of succinylglutamate semialdehyde into succinylglutamate. The sequence is that of N-succinylglutamate 5-semialdehyde dehydrogenase from Escherichia coli (strain UTI89 / UPEC).